The following is a 238-amino-acid chain: Tyrosine recombinase XerD-like (238 aa).

The Core-binding (CB) domain maps to 1–75 (MKLPNEIEEY…SANQYFLFLY (75 aa)). Residues 90–238 (VQKKTQSSES…TITALEKYYR (149 aa)) form the Tyr recombinase domain. Catalysis depends on residues Lys154 and Arg204. The active-site O-(3'-phospho-DNA)-tyrosine intermediate is the Tyr236.

This sequence belongs to the 'phage' integrase family. XerD-like subfamily.

It localises to the cytoplasm. In terms of biological role, putative tyrosine recombinase. Not involved in the cutting and rejoining of the recombining DNA molecules on dif(SL) site. This is Tyrosine recombinase XerD-like from Lactococcus lactis subsp. cremoris (strain SK11).